The primary structure comprises 132 residues: MVEKNTYFIGVGRRKTAVATVKLTSGNGVIVIDGKPIEERFTRVQERNVILNPMMVTDTMGKYNAVIKVLGGGVAGQSGAIAHGIARALEKSDDKLRATLKSNGLLTRDDRTKERKKPGLKRARKAPQYTKR.

A disordered region spans residues 100–132 (LKSNGLLTRDDRTKERKKPGLKRARKAPQYTKR). The span at 114–132 (ERKKPGLKRARKAPQYTKR) shows a compositional bias: basic residues.

It belongs to the universal ribosomal protein uS9 family.

This Dehalococcoides mccartyi (strain ATCC BAA-2266 / KCTC 15142 / 195) (Dehalococcoides ethenogenes (strain 195)) protein is Small ribosomal subunit protein uS9.